The sequence spans 65 residues: Putative per-hexamer repeat protein 2 (65 aa).

This Mus musculus (Mouse) protein is Putative per-hexamer repeat protein 2 (Phxr2).